We begin with the raw amino-acid sequence, 141 residues long: Venom protein family 1 protein 1 (141 aa).

The N-terminal stretch at 1-17 (MKSFIVVLCCLFAITYG) is a signal peptide. An intrachain disulfide couples cysteine 62 to cysteine 139.

It belongs to the insect vpf1 family. In terms of tissue distribution, expressed by the venom gland (posterior main gland) (at protein level).

It localises to the secreted. This chain is Venom protein family 1 protein 1, found in Platymeris rhadamanthus (Red spot assassin bug).